The chain runs to 681 residues: Transferrin (681 aa).

The first 18 residues, 1 to 18 (MALKLLTLIALTCAAANA), serve as a signal peptide directing secretion. Transferrin-like domains are found at residues 23–364 (YKLC…ERGH) and 371–676 (VRLC…DVIS). 2 cysteine pairs are disulfide-bonded: Cys-26/Cys-60 and Cys-35/Cys-51. The Fe(3+) site is built by Asp-75 and Tyr-108. 4 disulfides stabilise this stretch: Cys-132/Cys-228, Cys-181/Cys-207, Cys-204/Cys-213, and Cys-271/Cys-284. Residues Thr-134, Arg-138, Val-140, and Gly-141 each contribute to the hydrogencarbonate site. An N-linked (GlcNAc...) asparagine glycan is attached at Asn-218. Residue Tyr-222 participates in Fe(3+) binding. Residue Asn-355 is glycosylated (N-linked (GlcNAc...) asparagine). Disulfide bonds link Cys-374-Cys-411 and Cys-384-Cys-402. The N-linked (GlcNAc...) asparagine glycan is linked to Asn-418. Disulfide bonds link Cys-478–Cys-551, Cys-506–Cys-678, and Cys-579–Cys-596.

It belongs to the transferrin family.

It is found in the secreted. In terms of biological role, transferrins are iron binding transport proteins which bind Fe(3+) ion in association with the binding of an anion, usually bicarbonate. This transferrin binds only one Fe(3+) ion per protein molecule. The sequence is that of Transferrin from Manduca sexta (Tobacco hawkmoth).